The chain runs to 251 residues: 3-deoxy-manno-octulosonate cytidylyltransferase (251 aa).

This sequence belongs to the KdsB family.

Its subcellular location is the cytoplasm. The enzyme catalyses 3-deoxy-alpha-D-manno-oct-2-ulosonate + CTP = CMP-3-deoxy-beta-D-manno-octulosonate + diphosphate. It functions in the pathway nucleotide-sugar biosynthesis; CMP-3-deoxy-D-manno-octulosonate biosynthesis; CMP-3-deoxy-D-manno-octulosonate from 3-deoxy-D-manno-octulosonate and CTP: step 1/1. It participates in bacterial outer membrane biogenesis; lipopolysaccharide biosynthesis. Its function is as follows. Activates KDO (a required 8-carbon sugar) for incorporation into bacterial lipopolysaccharide in Gram-negative bacteria. The polypeptide is 3-deoxy-manno-octulosonate cytidylyltransferase (Vibrio parahaemolyticus serotype O3:K6 (strain RIMD 2210633)).